A 78-amino-acid polypeptide reads, in one-letter code: Large ribosomal subunit protein bL28 (78 aa).

It belongs to the bacterial ribosomal protein bL28 family.

This Prochlorococcus marinus (strain MIT 9312) protein is Large ribosomal subunit protein bL28.